Here is a 394-residue protein sequence, read N- to C-terminus: MDLFEYQARDLFAKHDVPVLAGEVIDTPEAAREITERLGGKSVVKAQVKVGGRGKAGGVKLAASADEAVARATDILGMDIKGHTVHKVMIAETAPEIVEEYYVSFLLDRANRTFLSIASVEGGVEIEEVAATRPEAVAKTPIDAIDGVTPEKAREIVEAAKFPAEVADKVADILVKLWDTFIKEDALLVEVNPLAKVVSGDVIALDGKVSLDDNAEFRHPDFEALHDKAAANPLEAAAKEKNLNYVKLDGEVGIIGNGAGLVMSTLDVVAYAGEAHGNVKPANFLDIGGGASAQVMANGLEIILGDPDVRSVFVNVFGGITACDEVANGIVQALKLLEDRGEKVEKPLVVRLDGNNAELGRKILTDANHPLVQRVDTMDGAADKAAELAHAAAK.

The ATP-grasp domain maps to 9–237 (RDLFAKHDVP…KAAANPLEAA (229 aa)). ATP is bound by residues lysine 45, 52-54 (GRG), glutamate 92, proline 95, and glutamate 100. Residues asparagine 192 and aspartate 206 each contribute to the Mg(2+) site. Substrate contacts are provided by residues asparagine 257 and 319 to 321 (GIT).

This sequence belongs to the succinate/malate CoA ligase beta subunit family. In terms of assembly, heterotetramer of two alpha and two beta subunits. It depends on Mg(2+) as a cofactor.

It catalyses the reaction succinate + ATP + CoA = succinyl-CoA + ADP + phosphate. The catalysed reaction is GTP + succinate + CoA = succinyl-CoA + GDP + phosphate. It functions in the pathway carbohydrate metabolism; tricarboxylic acid cycle; succinate from succinyl-CoA (ligase route): step 1/1. Its function is as follows. Succinyl-CoA synthetase functions in the citric acid cycle (TCA), coupling the hydrolysis of succinyl-CoA to the synthesis of either ATP or GTP and thus represents the only step of substrate-level phosphorylation in the TCA. The beta subunit provides nucleotide specificity of the enzyme and binds the substrate succinate, while the binding sites for coenzyme A and phosphate are found in the alpha subunit. This is Succinate--CoA ligase [ADP-forming] subunit beta 1 from Streptomyces coelicolor (strain ATCC BAA-471 / A3(2) / M145).